Here is a 257-residue protein sequence, read N- to C-terminus: Putative hydro-lyase Bcenmc03_3969 (257 aa).

It belongs to the D-glutamate cyclase family.

The sequence is that of Putative hydro-lyase Bcenmc03_3969 from Burkholderia orbicola (strain MC0-3).